An 89-amino-acid polypeptide reads, in one-letter code: Bombyxin B-2 (89 aa).

An N-terminal signal peptide occupies residues 1 to 19 (MKTSVMFMLVFVISLMCSS). 3 cysteine pairs are disulfide-bonded: Cys-29–Cys-75, Cys-41–Cys-88, and Cys-74–Cys-79. Residues 48–66 (SGAQYAPYFWTRQYLGSRG) constitute a propeptide, c peptide like.

This sequence belongs to the insulin family. As to quaternary structure, heterodimer of a B chain and an A chain linked by two disulfide bonds.

It localises to the secreted. Functionally, brain peptide responsible for activation of prothoracic glands to produce ecdysone in insects. This chain is Bombyxin B-2 (BBXB2), found in Bombyx mori (Silk moth).